The primary structure comprises 191 residues: Probable DNA-directed RNA polymerase subunit delta (191 aa).

Positions 14–83 constitute an HTH HARE-type domain; sequence LSMIEVARAI…GENKWGLRSW (70 aa). Acidic residues-rich tracts occupy residues 117–136 and 142–191; these read GDED…DFTE and EYDE…EEEV. The tract at residues 117–191 is disordered; the sequence is GDEDAIDYND…DEEEEEEEEV (75 aa).

This sequence belongs to the RpoE family. As to quaternary structure, RNAP is composed of a core of 2 alpha, a beta and a beta' subunits. The core is associated with a delta subunit and one of several sigma factors.

Participates in both the initiation and recycling phases of transcription. In the presence of the delta subunit, RNAP displays an increased specificity of transcription, a decreased affinity for nucleic acids, and an increased efficiency of RNA synthesis because of enhanced recycling. The chain is Probable DNA-directed RNA polymerase subunit delta from Streptococcus agalactiae serotype Ia (strain ATCC 27591 / A909 / CDC SS700).